A 346-amino-acid chain; its full sequence is Putative aquaporin-7B (346 aa).

The Cytoplasmic portion of the chain corresponds to 1 to 40; sequence MVQASGHRRSTRGSKMVSWSVIAKIQEIWCEEDERKMVRE. Residues 41 to 58 form a helical membrane-spanning segment; that stretch reads FLAEFMSTYVMMVFGLGS. The Extracellular segment spans residues 59–71; it reads VAHMVLNKTYGSY. Residues 72-89 traverse the membrane as a helical segment; that stretch reads LGVNLGFGFGVTMGVHVA. Residues 90 to 93 are Cytoplasmic-facing; that stretch reads GRIS. The discontinuously helical intramembrane region spans 94 to 107; the sequence is GAHMNAAVTFTNCA. Residues 98–100 carry the NPA 1 motif; sequence NAA. Over 108–115 the chain is Cytoplasmic; that stretch reads LGRVPWRK. The helical transmembrane segment at 116 to 136 threads the bilayer; sequence FPVHVLGQFLGSFLAAATIYS. The Extracellular portion of the chain corresponds to 137-174; the sequence is LFYTAILHFSGGELMVTGPFATAGIFATYLPDHMTLWR. Residues 175–192 form a helical membrane-spanning segment; that stretch reads GFLNEEWLTRMLQLCLFT. Residues 193 to 204 lie on the Cytoplasmic side of the membrane; sequence ITDQENNPALPG. A helical transmembrane segment spans residues 205–221; sequence THALVISILVVIIRVSH. The Extracellular segment spans residues 222 to 225; the sequence is GINT. The discontinuously helical intramembrane region spans 226-239; the sequence is GYAINPSRDPPPSI. The NPA 2 signature appears at 230 to 232; the sequence is NPS. At 240 to 257 the chain is on the extracellular side; that stretch reads FTFIAGWGKQVFSDGENW. The chain crosses the membrane as a helical span at residues 258-279; it reads WWVPVVAPLLGASLGGIIYLVF. Residues 280–346 lie on the Cytoplasmic side of the membrane; the sequence is IGSTIPREPL…LHESMALEHF (67 aa).

Belongs to the MIP/aquaporin (TC 1.A.8) family. Homotetramer; each monomer provides an independent glycerol/water pore.

The protein resides in the membrane. It catalyses the reaction glycerol(in) = glycerol(out). The catalysed reaction is H2O(in) = H2O(out). Its function is as follows. Aquaglyceroporins form homotetrameric transmembrane channels, with each monomer independently mediating glycerol and water transport across the plasma membrane along their osmotic gradient. In Homo sapiens (Human), this protein is Putative aquaporin-7B.